Reading from the N-terminus, the 444-residue chain is Putative zinc metalloprotease XF_1047 (444 aa).

A Zn(2+)-binding site is contributed by His-22. Glu-23 is an active-site residue. His-26 lines the Zn(2+) pocket. A helical transmembrane segment spans residues 98–120; the sequence is IAIVAAGPLANLLLCMLLLWVLF. In terms of domain architecture, PDZ spans 192–276; it reads TLELSKLKQP…DGHPGMIEIR (85 aa). The next 2 helical transmembrane spans lie at 371 to 393 and 418 to 440; these read VGWFIYFLSLLSLSLAIINLFPI and AMAAGQYIGLALLAGLMGLAFYN.

This sequence belongs to the peptidase M50B family. Zn(2+) is required as a cofactor.

The protein resides in the cell inner membrane. This chain is Putative zinc metalloprotease XF_1047, found in Xylella fastidiosa (strain 9a5c).